The sequence spans 360 residues: Variable large protein 14 (360 aa).

The first 18 residues, 1–18 (MRKRISAIIMTLFMVLAS), serve as a signal peptide directing secretion. Cys19 carries N-palmitoyl cysteine lipidation. Cys19 carries the S-diacylglycerol cysteine lipid modification.

It belongs to the variable large protein (Vlp) family. Beta subfamily.

It localises to the cell outer membrane. Its function is as follows. The Vlp and Vsp proteins are antigenically distinct proteins, only one vlp or vsp gene is transcriptionally active at any one time. Switching between these genes is a mechanism of host immune response evasion. In Borrelia hermsii, this protein is Variable large protein 14.